We begin with the raw amino-acid sequence, 239 residues long: tRNA (guanine-N(7)-)-methyltransferase (239 aa).

4 residues coordinate S-adenosyl-L-methionine: E68, E93, D120, and D143. D143 is a catalytic residue. Substrate is bound by residues K147, D180, and 217–220 (TKFE).

It belongs to the class I-like SAM-binding methyltransferase superfamily. TrmB family.

It carries out the reaction guanosine(46) in tRNA + S-adenosyl-L-methionine = N(7)-methylguanosine(46) in tRNA + S-adenosyl-L-homocysteine. It functions in the pathway tRNA modification; N(7)-methylguanine-tRNA biosynthesis. In terms of biological role, catalyzes the formation of N(7)-methylguanine at position 46 (m7G46) in tRNA. This is tRNA (guanine-N(7)-)-methyltransferase from Vibrio cholerae serotype O1 (strain ATCC 39315 / El Tor Inaba N16961).